The primary structure comprises 427 residues: Enolase (427 aa).

Residue Gln-163 coordinates (2R)-2-phosphoglycerate. The active-site Proton donor is Glu-205. Mg(2+)-binding residues include Asp-242, Glu-285, and Asp-312. (2R)-2-phosphoglycerate-binding residues include Lys-337, Arg-366, Ser-367, and Lys-388. The Proton acceptor role is filled by Lys-337.

It belongs to the enolase family. Mg(2+) serves as cofactor.

It is found in the cytoplasm. The protein localises to the secreted. It localises to the cell surface. The catalysed reaction is (2R)-2-phosphoglycerate = phosphoenolpyruvate + H2O. Its pathway is carbohydrate degradation; glycolysis; pyruvate from D-glyceraldehyde 3-phosphate: step 4/5. Its function is as follows. Catalyzes the reversible conversion of 2-phosphoglycerate (2-PG) into phosphoenolpyruvate (PEP). It is essential for the degradation of carbohydrates via glycolysis. In Janthinobacterium sp. (strain Marseille) (Minibacterium massiliensis), this protein is Enolase.